The chain runs to 1052 residues: RIMS-binding protein 2 (1052 aa).

The segment at 115–164 (GEYIRPLPQPGDRPEPLSAKPTFLSRSGSARCRSESDMENERNSNTSKQR) is disordered. Positions 146–156 (CRSESDMENER) are enriched in basic and acidic residues. Positions 167–234 (GKVHLCVARY…PSNFVDFVQD (68 aa)) constitute an SH3 1 domain. Fibronectin type-III domains are found at residues 297–390 (VPYP…GKDV), 393–475 (APSH…KKEA), and 489–590 (PPQD…VPPT). Disordered stretches follow at residues 584 to 615 (ELLV…DEHL), 629 to 666 (RAPG…PVST), 697 to 716 (SAGQ…PDFK), 767 to 787 (EMQL…NALK), and 805 to 829 (FPRG…YGRD). Pro residues predominate over residues 585–598 (LLVPPTPHPRPAPQ). Low complexity predominate over residues 645-654 (PGRRSPSPSR). Phosphoserine occurs at positions 704 and 712. Phosphoserine occurs at positions 832 and 839. Position 841 is a phosphothreonine (Thr-841). SH3 domains are found at residues 848-916 (LPAR…EIQA) and 952-1019 (VSTR…EVPD). The segment at 1029-1052 (PSHYSQDTPMRSKAKRKKSVHFTP) is disordered. Positions 1040–1052 (SKAKRKKSVHFTP) are enriched in basic residues.

It belongs to the RIMBP family. In terms of assembly, interacts with RIMS1, RIMS2, CACNA1D and CACNA1B, and potentially with other Ca(2+) channel alpha-1 isoforms.

Its subcellular location is the cell membrane. It localises to the synapse. Functionally, plays a role in the synaptic transmission as bifunctional linker that interacts simultaneously with RIMS1, RIMS2, CACNA1D and CACNA1B. This is RIMS-binding protein 2 (RIMBP2) from Homo sapiens (Human).